Consider the following 632-residue polypeptide: tRNA uridine 5-carboxymethylaminomethyl modification enzyme MnmG (632 aa).

Residues 13–18 (GGGHAG), Val125, and Ser180 each bind FAD. 273 to 287 (GPRYCPSIEDKVMRF) provides a ligand contact to NAD(+). Gln370 is a binding site for FAD.

This sequence belongs to the MnmG family. Homodimer. Heterotetramer of two MnmE and two MnmG subunits. Requires FAD as cofactor.

It localises to the cytoplasm. Its function is as follows. NAD-binding protein involved in the addition of a carboxymethylaminomethyl (cmnm) group at the wobble position (U34) of certain tRNAs, forming tRNA-cmnm(5)s(2)U34. This is tRNA uridine 5-carboxymethylaminomethyl modification enzyme MnmG from Vibrio vulnificus (strain CMCP6).